A 496-amino-acid polypeptide reads, in one-letter code: Thiamine transporter 2 (496 aa).

Residues Met1–Ser7 lie on the Cytoplasmic side of the membrane. A helical transmembrane segment spans residues Leu8 to Met28. Topologically, residues Arg29–Asn53 are extracellular. N-linked (GlcNAc...) asparagine glycosylation occurs at Asn45. Residues Glu54 to Thr74 form a helical membrane-spanning segment. Residues Asp75–Pro81 are Cytoplasmic-facing. Residues Val82–Gly102 form a helical membrane-spanning segment. Over Val103–Glu110 the chain is Extracellular. The chain crosses the membrane as a helical span at residues Phe111 to Val131. At Ser132–Arg144 the chain is on the cytoplasmic side. Residues Ser145–Ala165 traverse the membrane as a helical segment. The N-linked (GlcNAc...) asparagine glycan is linked to Asn166. Over Asn166–Tyr169 the chain is Extracellular. Residues Phe170–Leu190 traverse the membrane as a helical segment. Residues Pro191 to Ser282 are Cytoplasmic-facing. The chain crosses the membrane as a helical span at residues Leu283 to Trp303. Topologically, residues Asp304 to Asn316 are extracellular. The chain crosses the membrane as a helical span at residues Gly317–Val337. Topologically, residues Lys338 to Asp342 are cytoplasmic. The chain crosses the membrane as a helical span at residues Leu343 to Met363. Over His364–Gly375 the chain is Extracellular. A helical transmembrane segment spans residues Tyr376–Val396. Residues Asn397–Leu405 are Cytoplasmic-facing. Residues Val406 to Val426 traverse the membrane as a helical segment. At Asp427 to Pro434 the chain is on the extracellular side. Residues Val435–Met455 form a helical membrane-spanning segment. The Cytoplasmic segment spans residues Arg456–Leu496. Positions Lys468–Leu496 are disordered.

Belongs to the reduced folate carrier (RFC) transporter (TC 2.A.48) family. In terms of tissue distribution, widely expressed but most abundant in placenta, kidney and liver.

It localises to the membrane. It catalyses the reaction thiamine(out) + H(+)(in) = thiamine(in) + H(+)(out). The enzyme catalyses pyridoxine(out) + n H(+)(out) = pyridoxine(in) + n H(+)(in). Pyridoxine transport is inhibited by carbonyl cyanide p-trifluoromethoxyphenylhydrazone (FCCP) and carbonyl cyanide m-chlorophenylhydrazone (CCCP). In terms of biological role, mediates high affinity thiamine uptake, probably via a proton anti-port mechanism. Has no folate transport activity. Mediates H(+)-dependent pyridoxine transport. The polypeptide is Thiamine transporter 2 (SLC19A3) (Homo sapiens (Human)).